The sequence spans 433 residues: Enolase (433 aa).

Q163 serves as a coordination point for (2R)-2-phosphoglycerate. The Proton donor role is filled by E205. Mg(2+) is bound by residues D242, E291, and D318. Positions 343, 372, 373, and 394 each coordinate (2R)-2-phosphoglycerate. The Proton acceptor role is filled by K343.

The protein belongs to the enolase family. It depends on Mg(2+) as a cofactor.

The protein resides in the cytoplasm. It is found in the secreted. Its subcellular location is the cell surface. The catalysed reaction is (2R)-2-phosphoglycerate = phosphoenolpyruvate + H2O. The protein operates within carbohydrate degradation; glycolysis; pyruvate from D-glyceraldehyde 3-phosphate: step 4/5. Its function is as follows. Catalyzes the reversible conversion of 2-phosphoglycerate (2-PG) into phosphoenolpyruvate (PEP). It is essential for the degradation of carbohydrates via glycolysis. In Methylibium petroleiphilum (strain ATCC BAA-1232 / LMG 22953 / PM1), this protein is Enolase.